Here is a 202-residue protein sequence, read N- to C-terminus: Small ribosomal subunit protein uS2 (202 aa).

This sequence belongs to the universal ribosomal protein uS2 family. Part of the 30S ribosomal subunit.

This is Small ribosomal subunit protein uS2 from Pyrococcus furiosus (strain ATCC 43587 / DSM 3638 / JCM 8422 / Vc1).